A 146-amino-acid polypeptide reads, in one-letter code: Protein JTB (146 aa).

The signal sequence occupies residues 1 to 30; the sequence is MLAGAGRPGLPQGRHLCWLLCAFTLKLCQA. Over 31 to 105 the chain is Extracellular; it reads EAPVQEEKLS…CRSALMEQRL (75 aa). A helical transmembrane segment spans residues 106-126; it reads FWKFEGAVVCVALIFACLVII. At 127 to 146 the chain is on the cytoplasmic side; that stretch reads RQRQLDRKALEKVRKQIESI.

The protein belongs to the JTB family. In terms of assembly, interacts with AURKA, AURKB, BIRC5 and INCENP. May be a component of the CPC at least composed of BIRC5/survivin, CDCA8/borealin, INCENP and AURKB/Aurora-B. In terms of tissue distribution, ubiquitous. Expressed in all normal human tissues studied but overexpressed or underexpressed in many of their malignant counterparts.

It is found in the membrane. The protein resides in the mitochondrion. The protein localises to the cytoplasm. It localises to the cytoskeleton. Its subcellular location is the microtubule organizing center. It is found in the centrosome. The protein resides in the spindle. Its function is as follows. Required for normal cytokinesis during mitosis. Plays a role in the regulation of cell proliferation. May be a component of the chromosomal passenger complex (CPC), a complex that acts as a key regulator of mitosis. The CPC complex has essential functions at the centromere in ensuring correct chromosome alignment and segregation and is required for chromatin-induced microtubule stabilization and spindle assembly. Increases AURKB activity. Inhibits apoptosis induced by TGFB1. Overexpression induces swelling of mitochondria and reduces mitochondrial membrane potential. This is Protein JTB (JTB) from Homo sapiens (Human).